We begin with the raw amino-acid sequence, 107 residues long: Nucleoid-associated protein Rru_A3472 (107 aa).

Belongs to the YbaB/EbfC family. In terms of assembly, homodimer.

The protein localises to the cytoplasm. Its subcellular location is the nucleoid. Functionally, binds to DNA and alters its conformation. May be involved in regulation of gene expression, nucleoid organization and DNA protection. The sequence is that of Nucleoid-associated protein Rru_A3472 from Rhodospirillum rubrum (strain ATCC 11170 / ATH 1.1.1 / DSM 467 / LMG 4362 / NCIMB 8255 / S1).